The following is a 168-amino-acid chain: Small ribosomal subunit protein uS5 (168 aa).

The region spanning tyrosine 11–isoleucine 74 is the S5 DRBM domain.

It belongs to the universal ribosomal protein uS5 family. As to quaternary structure, part of the 30S ribosomal subunit. Contacts proteins S4 and S8.

In terms of biological role, with S4 and S12 plays an important role in translational accuracy. Functionally, located at the back of the 30S subunit body where it stabilizes the conformation of the head with respect to the body. The sequence is that of Small ribosomal subunit protein uS5 from Leptospira interrogans serogroup Icterohaemorrhagiae serovar copenhageni (strain Fiocruz L1-130).